The sequence spans 508 residues: Probable cytosol aminopeptidase (508 aa).

Mn(2+) contacts are provided by Lys-274 and Asp-279. The active site involves Lys-286. Mn(2+) is bound by residues Asp-297, Asp-356, and Glu-358. Arg-360 is an active-site residue.

Belongs to the peptidase M17 family. It depends on Mn(2+) as a cofactor.

The protein resides in the cytoplasm. It catalyses the reaction Release of an N-terminal amino acid, Xaa-|-Yaa-, in which Xaa is preferably Leu, but may be other amino acids including Pro although not Arg or Lys, and Yaa may be Pro. Amino acid amides and methyl esters are also readily hydrolyzed, but rates on arylamides are exceedingly low.. The catalysed reaction is Release of an N-terminal amino acid, preferentially leucine, but not glutamic or aspartic acids.. In terms of biological role, presumably involved in the processing and regular turnover of intracellular proteins. Catalyzes the removal of unsubstituted N-terminal amino acids from various peptides. This is Probable cytosol aminopeptidase from Cutibacterium acnes (strain DSM 16379 / KPA171202) (Propionibacterium acnes).